The primary structure comprises 162 residues: MKTPLTEAISAADVRGSYLSNTEMQAVFGRFNRARAGLAAAQAFSNNGKKWAEAAANHVYQKFPYTTQMSGPQYASTPEGKSKCVRDIDHYLRTISYCCVVGGTGPLDEYVVSGLSELNSALGLSPSWYVAALEFVRDNHGLNGDVAGEANIYLNYAINALS.

Cys84 serves as a coordination point for (15Z)-phycoviolobilin.

It belongs to the phycobiliprotein family. In terms of assembly, heterodimer of an alpha and a beta chain. Contains one covalently linked bilin chromophore.

Its subcellular location is the cellular thylakoid membrane. Functionally, light-harvesting photosynthetic bile pigment-protein from the phycobiliprotein complex. This is Phycoerythrocyanin alpha chain (pecA) from Nostoc sp. (strain PCC 7120 / SAG 25.82 / UTEX 2576).